Here is a 115-residue protein sequence, read N- to C-terminus: MQKDSGPLVPLHYYGFGYAALVATGGIIGYAKAGSVPSLAAGLFFGGLAGLGAYQLSQDPRNVWVFLATSGTLAGIMGMRFYNSGKFMPAGLIAGASLLMVAPGVAKIQEITTMP.

4 consecutive transmembrane segments (helical) span residues 8 to 28 (LVPL…GGII), 33 to 53 (AGSV…GLGA), 63 to 83 (VWVF…RFYN), and 88 to 108 (MPAG…VAKI).

Belongs to the TMEM14 family.

Its subcellular location is the mitochondrion membrane. In terms of biological role, required for normal heme biosynthesis. This Rattus norvegicus (Rat) protein is Transmembrane protein 14C (Tmem14c).